Here is a 269-residue protein sequence, read N- to C-terminus: 4-hydroxy-tetrahydrodipicolinate reductase (269 aa).

Residues 8 to 13 (GAGGRM) and Glu-34 each bind NAD(+). Residue Arg-35 participates in NADP(+) binding. NAD(+)-binding positions include 98-100 (GTT) and 122-125 (ASNY). His-155 functions as the Proton donor/acceptor in the catalytic mechanism. His-156 contacts (S)-2,3,4,5-tetrahydrodipicolinate. Lys-159 functions as the Proton donor in the catalytic mechanism. 165–166 (GT) contributes to the (S)-2,3,4,5-tetrahydrodipicolinate binding site.

It belongs to the DapB family.

It is found in the cytoplasm. The catalysed reaction is (S)-2,3,4,5-tetrahydrodipicolinate + NAD(+) + H2O = (2S,4S)-4-hydroxy-2,3,4,5-tetrahydrodipicolinate + NADH + H(+). The enzyme catalyses (S)-2,3,4,5-tetrahydrodipicolinate + NADP(+) + H2O = (2S,4S)-4-hydroxy-2,3,4,5-tetrahydrodipicolinate + NADPH + H(+). Its pathway is amino-acid biosynthesis; L-lysine biosynthesis via DAP pathway; (S)-tetrahydrodipicolinate from L-aspartate: step 4/4. Functionally, catalyzes the conversion of 4-hydroxy-tetrahydrodipicolinate (HTPA) to tetrahydrodipicolinate. The protein is 4-hydroxy-tetrahydrodipicolinate reductase of Haemophilus ducreyi (strain 35000HP / ATCC 700724).